We begin with the raw amino-acid sequence, 196 residues long: MNINTDIFKIQSNNVMPSRGKILISEPFLHDVTFGRSVVLLVDHTEEGSMGLIINKPLPLMLNDIIKEFKYIEDIPLHKGGPIGTDTLFYLHTLHEIPGTLPINNGLYLNGDFDAIKKYILQGNPIKGKIRFFLGYSGWECEQLIQEIKENTWIISKEENTYLMNEDIKGMWKEALGKLGSKYETWSRFPQVPSLN.

This sequence belongs to the UPF0301 (AlgH) family.

In Bacteroides fragilis (strain ATCC 25285 / DSM 2151 / CCUG 4856 / JCM 11019 / LMG 10263 / NCTC 9343 / Onslow / VPI 2553 / EN-2), this protein is UPF0301 protein BF2109.